Reading from the N-terminus, the 196-residue chain is MTREKNPLPITFYQKTALELAPSLLGCLLVKETDEGTASGYIVETEAYMGAGDRAAHSFNNRRTKRTEIMFAEAGRVYTYVMHTHTLLNVVAAEEDVPQAVLIRAIEPHEGQLLMEERRPGRSPREWTNGPGKLTKALGVTMNDYGRWITEQPLYIESGYTPEAISTGPRIGIDNSGEARDYPWRFWVTGNRYVSR.

This sequence belongs to the DNA glycosylase MPG family.

This chain is Putative 3-methyladenine DNA glycosylase (yxlJ), found in Bacillus subtilis (strain 168).